The primary structure comprises 520 residues: Probable bifunctional tRNA threonylcarbamoyladenosine biosynthesis protein (520 aa).

Positions 1–318 (MKIGPVLGIE…YRADQVLVTW (318 aa)) are kae1. The Fe cation site is built by H105, H109, and Y126. Residues 126–130 (YASGA), D158, G171, E175, and N251 contribute to the L-threonylcarbamoyladenylate site. D279 is a binding site for Fe cation. The 194-residue stretch at 327–520 (RHPDAYSARG…HEIELRGRYL (194 aa)) folds into the Protein kinase domain. ATP-binding positions include 333-341 (SARGAEAIV) and K350. D437 (proton acceptor; for kinase activity) is an active-site residue.

This sequence in the N-terminal section; belongs to the KAE1 / TsaD family. In the C-terminal section; belongs to the protein kinase superfamily. Tyr protein kinase family. BUD32 subfamily. Component of the KEOPS complex that consists of Kae1, Bud32, Cgi121 and Pcc1; the whole complex dimerizes. Fe(2+) serves as cofactor.

The protein localises to the cytoplasm. It carries out the reaction L-seryl-[protein] + ATP = O-phospho-L-seryl-[protein] + ADP + H(+). The catalysed reaction is L-threonyl-[protein] + ATP = O-phospho-L-threonyl-[protein] + ADP + H(+). The enzyme catalyses L-threonylcarbamoyladenylate + adenosine(37) in tRNA = N(6)-L-threonylcarbamoyladenosine(37) in tRNA + AMP + H(+). In terms of biological role, required for the formation of a threonylcarbamoyl group on adenosine at position 37 (t(6)A37) in tRNAs that read codons beginning with adenine. Is a component of the KEOPS complex that is probably involved in the transfer of the threonylcarbamoyl moiety of threonylcarbamoyl-AMP (TC-AMP) to the N6 group of A37. The Kae1 domain likely plays a direct catalytic role in this reaction. The Bud32 domain probably displays kinase activity that regulates Kae1 function. The polypeptide is Probable bifunctional tRNA threonylcarbamoyladenosine biosynthesis protein (Methanospirillum hungatei JF-1 (strain ATCC 27890 / DSM 864 / NBRC 100397 / JF-1)).